A 197-amino-acid chain; its full sequence is HTH-type transcriptional repressor BdcR (197 aa).

The 61-residue stretch at 15-75 (RFAPEQAISA…RVLNEYVGTE (61 aa)) folds into the HTH tetR-type domain. The H-T-H motif DNA-binding region spans 38–57 (SVAEVTDYLGINPPSLYAAF).

Functionally, negatively regulates expression of bdcA. The sequence is that of HTH-type transcriptional repressor BdcR (bdcR) from Escherichia coli (strain K12).